The following is a 288-amino-acid chain: Glycine--tRNA ligase alpha subunit (288 aa).

It belongs to the class-II aminoacyl-tRNA synthetase family. In terms of assembly, tetramer of two alpha and two beta subunits.

It is found in the cytoplasm. It carries out the reaction tRNA(Gly) + glycine + ATP = glycyl-tRNA(Gly) + AMP + diphosphate. The protein is Glycine--tRNA ligase alpha subunit of Rickettsia africae (strain ESF-5).